The following is a 419-amino-acid chain: Phosphatidylinositol 5-phosphate 4-kinase type-2 gamma (419 aa).

The PIPK domain occupies 46–418 (ASDPLISVFM…RFLEFVTNIF (373 aa)). Acidic residues predominate over residues 299 to 310 (QEEEEDLEEDHT). The segment at 299 to 320 (QEEEEDLEEDHTENESSPHMNV) is disordered.

Phosphorylated, phosphorylation is induced by EGF.

It is found in the endoplasmic reticulum. The protein localises to the cytoplasm. It carries out the reaction a 1,2-diacyl-sn-glycero-3-phospho-(1D-myo-inositol-5-phosphate) + ATP = a 1,2-diacyl-sn-glycero-3-phospho-(1D-myo-inositol-4,5-bisphosphate) + ADP + H(+). It catalyses the reaction 1,2-dihexadecanoyl-sn-glycero-3-phospho-(1D-myo-inositol-5-phosphate) + ATP = 1,2-dihexadecanoyl-sn-glycero-3-phospho-(1D-myo-inositol-4,5-bisphosphate) + ADP + H(+). The enzyme catalyses 1,2-dihexadecanoyl-sn-glycero-3-phospho-(1D-myo-inositol-5-phosphate) + GTP = 1,2-dihexadecanoyl-sn-glycero-3-phospho-(1D-myo-inositol-4,5-bisphosphate) + GDP + H(+). In terms of biological role, phosphatidylinositol 5-phosphate 4-kinase with low enzymatic activity. May be a GTP sensor, has higher GTP-dependent kinase activity than ATP-dependent kinase activity. The chain is Phosphatidylinositol 5-phosphate 4-kinase type-2 gamma (pip4k2c) from Xenopus tropicalis (Western clawed frog).